Here is a 488-residue protein sequence, read N- to C-terminus: Glutamyl-tRNA(Gln) amidotransferase subunit A (488 aa).

Active-site charge relay system residues include Lys-76 and Ser-151. The active-site Acyl-ester intermediate is Ser-175.

It belongs to the amidase family. GatA subfamily. Heterotrimer of A, B and C subunits.

It carries out the reaction L-glutamyl-tRNA(Gln) + L-glutamine + ATP + H2O = L-glutaminyl-tRNA(Gln) + L-glutamate + ADP + phosphate + H(+). Allows the formation of correctly charged Gln-tRNA(Gln) through the transamidation of misacylated Glu-tRNA(Gln) in organisms which lack glutaminyl-tRNA synthetase. The reaction takes place in the presence of glutamine and ATP through an activated gamma-phospho-Glu-tRNA(Gln). The chain is Glutamyl-tRNA(Gln) amidotransferase subunit A from Symbiobacterium thermophilum (strain DSM 24528 / JCM 14929 / IAM 14863 / T).